Consider the following 168-residue polypeptide: Fusaric acid resistance protein FusE (168 aa).

In terms of biological role, involved in the resistance (detoxification) of the fungal toxin fusaric acid. The chain is Fusaric acid resistance protein FusE (fusE) from Burkholderia cepacia (Pseudomonas cepacia).